The following is a 251-amino-acid chain: 3-deoxy-manno-octulosonate cytidylyltransferase (251 aa).

It belongs to the KdsB family.

The protein localises to the cytoplasm. It carries out the reaction 3-deoxy-alpha-D-manno-oct-2-ulosonate + CTP = CMP-3-deoxy-beta-D-manno-octulosonate + diphosphate. It participates in nucleotide-sugar biosynthesis; CMP-3-deoxy-D-manno-octulosonate biosynthesis; CMP-3-deoxy-D-manno-octulosonate from 3-deoxy-D-manno-octulosonate and CTP: step 1/1. The protein operates within bacterial outer membrane biogenesis; lipopolysaccharide biosynthesis. In terms of biological role, activates KDO (a required 8-carbon sugar) for incorporation into bacterial lipopolysaccharide in Gram-negative bacteria. This Vibrio vulnificus (strain CMCP6) protein is 3-deoxy-manno-octulosonate cytidylyltransferase.